We begin with the raw amino-acid sequence, 326 residues long: Probable cell division protein WhiA (326 aa).

The H-T-H motif DNA-binding region spans 275–308 (SLEELGQLSDPPLTKDAVAGRIRRLLAMADKKAS).

Belongs to the WhiA family.

Its function is as follows. Involved in cell division and chromosome segregation. The sequence is that of Probable cell division protein WhiA from Beutenbergia cavernae (strain ATCC BAA-8 / DSM 12333 / CCUG 43141 / JCM 11478 / NBRC 16432 / NCIMB 13614 / HKI 0122).